The chain runs to 234 residues: tRNA (guanine-N(1)-)-methyltransferase (234 aa).

Residues G112 and 132-137 (IGDFIL) contribute to the S-adenosyl-L-methionine site.

This sequence belongs to the RNA methyltransferase TrmD family. In terms of assembly, homodimer.

The protein resides in the cytoplasm. The catalysed reaction is guanosine(37) in tRNA + S-adenosyl-L-methionine = N(1)-methylguanosine(37) in tRNA + S-adenosyl-L-homocysteine + H(+). Functionally, specifically methylates guanosine-37 in various tRNAs. This Campylobacter jejuni subsp. doylei (strain ATCC BAA-1458 / RM4099 / 269.97) protein is tRNA (guanine-N(1)-)-methyltransferase.